We begin with the raw amino-acid sequence, 283 residues long: Glutamate racemase (283 aa).

Substrate contacts are provided by residues 7–8 (DS) and 39–40 (YG). Catalysis depends on cysteine 70, which acts as the Proton donor/acceptor. Position 71–72 (71–72 (NT)) interacts with substrate. Cysteine 206 (proton donor/acceptor) is an active-site residue. 207 to 208 (TH) contacts substrate.

The protein belongs to the aspartate/glutamate racemases family.

It catalyses the reaction L-glutamate = D-glutamate. It functions in the pathway cell wall biogenesis; peptidoglycan biosynthesis. Functionally, provides the (R)-glutamate required for cell wall biosynthesis. In Phenylobacterium zucineum (strain HLK1), this protein is Glutamate racemase.